The sequence spans 1076 residues: Histone deacetylase 4 (1076 aa).

Residues 66–169 (REQQLQQELL…GKESAVASTE (104 aa)) adopt a coiled-coil conformation. Positions 117-312 (MLAMKHQQEL…NSSSGNVSTE (196 aa)) are interaction with MEF2A. The segment covering 132–162 (KLERHRQEQELEKQHREQKLQQLKNKEKGKE) has biased composition (basic and acidic residues). Disordered stretches follow at residues 132–166 (KLERHRQEQELEKQHREQKLQQLKNKEKGKESAVA), 205–225 (TQHSSLDQSSPPQSGVSASYN), and 239–323 (PLRK…PSAP). The segment covering 205–224 (TQHSSLDQSSPPQSGVSASY) has biased composition (polar residues). Residue S209 is modified to Phosphoserine. S245 is modified (phosphoserine; by CaMK4 and SIK1). A compositionally biased stretch (basic and acidic residues) spans 258-273 (KVAERRSSPLLRRKDG). Residues 289–310 (SACSSAPGSGPSSPNSSSGNVS) are compositionally biased toward low complexity. The PxLPxI/L motif; mediates interaction with ANKRA2 and 14-3-3 proteins signature appears at 348–353 (PSLPNI). At S349 the chain carries Phosphoserine. Residue S465 is modified to Phosphoserine; by CaMK4 and SIK1. Disordered regions lie at residues 506 to 529 (ISKPSEPPRQPESHPEETEEELRE), 541 to 580 (RLPGQKEPSLAGVQVKQEPIESEEEEAEATRETEPGQRPA), and 622 to 645 (RPLSRAQSSPASATFPMSVQEPPT). Positions 514–529 (RQPESHPEETEEELRE) are enriched in basic and acidic residues. K556 participates in a covalent cross-link: Glycyl lysine isopeptide (Lys-Gly) (interchain with G-Cter in SUMO). S562 bears the Phosphoserine mark. A compositionally biased stretch (polar residues) spans 626-638 (RAQSSPASATFPM). S629 is subject to Phosphoserine; by CaMK4. S630 is modified (phosphoserine). The segment at 652 to 1076 (GLVYDTLMLK…EEPMEEEPPL (425 aa)) is histone deacetylase. The Zn(2+) site is built by C664, C666, H672, and C743. The active site involves H795. The Nuclear export signal signature appears at 1043 to 1076 (EEAETVTAMASLSVGVKPAEKRSEEEPMEEEPPL).

Belongs to the histone deacetylase family. HD type 2 subfamily. As to quaternary structure, homodimer. Homodimerization via its N-terminal domain. Interacts with HDAC7. Interacts with MEF2A, MEF2C, MEF2D, MORC2 and NR2C1. Interacts with a 14-3-3 chaperone proteins in a phosphorylation dependent manner. Interacts with 14-3-3 protein YWHAB. Interacts with BTBD14B. Interacts with KDM5B. Interacts (via PxLPxI/L motif) with ANKRA2 (via ankyrin repeats). Interacts with CUL7 (as part of the 3M complex); negatively regulated by ANKRA2. Interacts with EP300 in the presence of TFAP2C. Interacts with AHRR. Interacts with MYOCD. Interacts with HSPA1A and HSPA1B leading to their deacetylation at 'Lys-77'. Interacts with ZBTB7B; the interaction allows the recruitment of HDAC4 on CD8 loci for deacetylation and possible inhibition of CD8 genes expression. Interacts with DHX36. Interacts with SIK3; this interaction leads to HDAC4 retention in the cytoplasm. Interacts with ZNF638. In terms of processing, phosphorylated by CaMK4 at Ser-245, Ser-465 and Ser-629. Phosphorylation at other residues by CaMK2D is required for the interaction with 14-3-3. Phosphorylation at Ser-349, within the PxLPxI/L motif, impairs the binding of ANKRA2 but generates a high-affinity docking site for 14-3-3. Post-translationally, sumoylation on Lys-556 is promoted by the E3 SUMO-protein ligase RANBP2, and prevented by phosphorylation by CaMK4.

It localises to the nucleus. Its subcellular location is the cytoplasm. The catalysed reaction is N(6)-acetyl-L-lysyl-[histone] + H2O = L-lysyl-[histone] + acetate. Its function is as follows. Responsible for the deacetylation of lysine residues on the N-terminal part of the core histones (H2A, H2B, H3 and H4). Histone deacetylation gives a tag for epigenetic repression and plays an important role in transcriptional regulation, cell cycle progression and developmental events. Histone deacetylases act via the formation of large multiprotein complexes. Involved in muscle maturation via its interaction with the myocyte enhancer factors such as MEF2A, MEF2C and MEF2D. Deacetylates HSPA1A and HSPA1A at 'Lys-77' leading to their preferential binding to co-chaperone STUB1. This chain is Histone deacetylase 4 (Hdac4), found in Mus musculus (Mouse).